The chain runs to 182 residues: ADP-ribosylation factor 1 (182 aa).

The N-myristoyl glycine moiety is linked to residue G2. Positions 3 to 16 (NVFANLFKGLFGKK) are important for the stable binding to the membranes. GTP is bound by residues 24–32 (GLDAAGKTT), 126–129 (NKQD), and A160.

It belongs to the small GTPase superfamily. Arf family.

The protein localises to the golgi apparatus membrane. It is found in the cytoplasm. Its subcellular location is the cytosol. It carries out the reaction GTP + H2O = GDP + phosphate + H(+). With respect to regulation, alternates between an inactive GDP-bound form and an active GTP-bound form. Activated by a guanine nucleotide-exchange factor (GEF) and inactivated by GTPase-activating protein (GAP). In terms of biological role, small GTPase involved in protein trafficking between different compartments. Modulates vesicle budding and uncoating within the Golgi complex. In its GTP-bound form, triggers the recruitment of coatomer proteins to the Golgi membrane. The hydrolysis of ARF1-bound GTP, which is mediated by ARFGAPs proteins, is required for dissociation of coat proteins from Golgi membranes and vesicles. Has a role in eye development. Required for cleavage furrow ingression in embryonic cells. In Drosophila melanogaster (Fruit fly), this protein is ADP-ribosylation factor 1.